Consider the following 496-residue polypeptide: Sugar transporter ERD6 (496 aa).

6 helical membrane-spanning segments follow: residues 58 to 78, 94 to 114, 128 to 148, 156 to 176, 183 to 203, and 211 to 231; these read VFLS…GVGF, VAEY…GAVF, MLFC…AQNA, LLLG…IAEI, GSFV…FFII, and LLTV…FFIP. S256 bears the Phosphoserine mark. 6 helical membrane-spanning segments follow: residues 292-312, 329-349, 364-384, 394-414, 430-450, and 456-476; these read YPLI…SSGV, IGTS…TVLV, AMGL…FGIL, IGVL…PWII, LVTV…NFML, and GMFL…YFLV.

The protein belongs to the major facilitator superfamily. Sugar transporter (TC 2.A.1.1) family. As to expression, expressed in both shoots and roots. In roots, expressed in epidermal cells and especially strongly in cortex cells. In flowers, expressed in sepals.

The protein localises to the membrane. Its function is as follows. Sugar transporter. This Arabidopsis thaliana (Mouse-ear cress) protein is Sugar transporter ERD6 (ERD6).